A 725-amino-acid chain; its full sequence is IML2-like protein SCY_3392 (725 aa).

The residue at position 196 (threonine 196) is a Phosphothreonine. Phosphoserine occurs at positions 246, 377, and 380.

This sequence belongs to the IML2 family.

The protein resides in the cytoplasm. Its subcellular location is the nucleus. In terms of biological role, may be involved in mitochondrial DNA stability. This chain is IML2-like protein SCY_3392, found in Saccharomyces cerevisiae (strain YJM789) (Baker's yeast).